The chain runs to 447 residues: Glucose-6-phosphate isomerase (447 aa).

Residue glutamate 289 is the Proton donor of the active site. Residues histidine 310 and lysine 424 contribute to the active site.

The protein belongs to the GPI family.

The protein resides in the cytoplasm. The catalysed reaction is alpha-D-glucose 6-phosphate = beta-D-fructose 6-phosphate. The protein operates within carbohydrate biosynthesis; gluconeogenesis. It functions in the pathway carbohydrate degradation; glycolysis; D-glyceraldehyde 3-phosphate and glycerone phosphate from D-glucose: step 2/4. Its function is as follows. Catalyzes the reversible isomerization of glucose-6-phosphate to fructose-6-phosphate. The sequence is that of Glucose-6-phosphate isomerase from Parabacteroides distasonis (strain ATCC 8503 / DSM 20701 / CIP 104284 / JCM 5825 / NCTC 11152).